The sequence spans 378 residues: Cytochrome b (378 aa).

Helical transmembrane passes span phenylalanine 34 to methionine 54, tryptophan 78 to valine 99, tryptophan 114 to leucine 134, and phenylalanine 179 to leucine 199. Heme b contacts are provided by histidine 84 and histidine 98. 2 residues coordinate heme b: histidine 183 and histidine 197. Position 202 (histidine 202) interacts with a ubiquinone. The next 4 membrane-spanning stretches (helical) occupy residues tyrosine 227–phenylalanine 247, leucine 289–histidine 309, leucine 321–alanine 341, and tyrosine 348–leucine 368.

The protein belongs to the cytochrome b family. As to quaternary structure, the main subunits of complex b-c1 are: cytochrome b, cytochrome c1 and the Rieske protein. Heme b is required as a cofactor.

It is found in the mitochondrion inner membrane. Its function is as follows. Component of the ubiquinol-cytochrome c reductase complex (complex III or cytochrome b-c1 complex) that is part of the mitochondrial respiratory chain. The b-c1 complex mediates electron transfer from ubiquinol to cytochrome c. Contributes to the generation of a proton gradient across the mitochondrial membrane that is then used for ATP synthesis. The polypeptide is Cytochrome b (MT-CYB) (Anopheles quadrimaculatus (Common malaria mosquito)).